The following is a 290-amino-acid chain: 33 kDa chaperonin (290 aa).

Cystine bridges form between Cys234–Cys236 and Cys267–Cys270.

This sequence belongs to the HSP33 family. Post-translationally, under oxidizing conditions two disulfide bonds are formed involving the reactive cysteines. Under reducing conditions zinc is bound to the reactive cysteines and the protein is inactive.

Its subcellular location is the cytoplasm. Functionally, redox regulated molecular chaperone. Protects both thermally unfolding and oxidatively damaged proteins from irreversible aggregation. Plays an important role in the bacterial defense system toward oxidative stress. This is 33 kDa chaperonin from Colwellia psychrerythraea (strain 34H / ATCC BAA-681) (Vibrio psychroerythus).